The primary structure comprises 196 residues: ATP-dependent Clp protease proteolytic subunit (196 aa).

S101 acts as the Nucleophile in catalysis. H126 is an active-site residue.

The protein belongs to the peptidase S14 family. Component of the chloroplastic Clp protease core complex.

It localises to the plastid. The protein resides in the chloroplast stroma. It catalyses the reaction Hydrolysis of proteins to small peptides in the presence of ATP and magnesium. alpha-casein is the usual test substrate. In the absence of ATP, only oligopeptides shorter than five residues are hydrolyzed (such as succinyl-Leu-Tyr-|-NHMec, and Leu-Tyr-Leu-|-Tyr-Trp, in which cleavage of the -Tyr-|-Leu- and -Tyr-|-Trp bonds also occurs).. In terms of biological role, cleaves peptides in various proteins in a process that requires ATP hydrolysis. Has a chymotrypsin-like activity. Plays a major role in the degradation of misfolded proteins. In Citrus sinensis (Sweet orange), this protein is ATP-dependent Clp protease proteolytic subunit.